Here is a 90-residue protein sequence, read N- to C-terminus: Bombyxin B-6 (90 aa).

The first 20 residues, 1–20 (MMKTSVMFMLVVVISLMCSS), serve as a signal peptide directing secretion. 3 disulfide bridges follow: Cys30/Cys76, Cys42/Cys89, and Cys75/Cys80. A propeptide spans 49-67 (GVAQYAPYFWTRQYLGSRG) (c peptide like).

Belongs to the insulin family. As to quaternary structure, heterodimer of a B chain and an A chain linked by two disulfide bonds.

The protein resides in the secreted. In terms of biological role, brain peptide responsible for activation of prothoracic glands to produce ecdysone in insects. The sequence is that of Bombyxin B-6 (BBXB6) from Bombyx mori (Silk moth).